The sequence spans 327 residues: Mitochondrial substrate carrier family protein A (327 aa).

Residues M1–T36 are disordered. Over M1 to D48 the chain is Mitochondrial intermembrane. 3 Solcar repeats span residues L43–M132, I140–K224, and P233–L323. Residues F49–L66 form a helical membrane-spanning segment. Topologically, residues E67–R106 are mitochondrial matrix. Residues G107–G127 form a helical membrane-spanning segment. Over A128–R145 the chain is Mitochondrial intermembrane. Residues M146–I166 traverse the membrane as a helical segment. The Mitochondrial matrix portion of the chain corresponds to K167–G192. Residues I193–L213 traverse the membrane as a helical segment. The Mitochondrial intermembrane portion of the chain corresponds to N214–P238. The chain crosses the membrane as a helical span at residues S239–V259. The Mitochondrial matrix segment spans residues K260 to Y303. Residues L304–F324 form a helical membrane-spanning segment. The Mitochondrial intermembrane segment spans residues E325–K327.

It belongs to the mitochondrial carrier (TC 2.A.29) family.

Its subcellular location is the mitochondrion inner membrane. In terms of biological role, calcium-dependent mitochondrial solute carrier. Mitochondrial solute carriers shuttle metabolites, nucleotides, and cofactors through the mitochondrial inner membrane. In Dictyostelium discoideum (Social amoeba), this protein is Mitochondrial substrate carrier family protein A (mcfA).